A 119-amino-acid polypeptide reads, in one-letter code: Basic phospholipase A2 notexin (119 aa).

Disulfide bonds link C11-C71, C27-C118, C29-C45, C44-C99, C51-C92, C60-C85, and C78-C90. Residues Y28, G30, and G32 each coordinate Ca(2+). H48 is an active-site residue. D49 is a Ca(2+) binding site. D93 is a catalytic residue.

The protein belongs to the phospholipase A2 family. Group I subfamily. D49 sub-subfamily. Monomer. It depends on Ca(2+) as a cofactor. In terms of tissue distribution, expressed by the venom gland.

The protein localises to the secreted. The enzyme catalyses a 1,2-diacyl-sn-glycero-3-phosphocholine + H2O = a 1-acyl-sn-glycero-3-phosphocholine + a fatty acid + H(+). Functionally, snake venom phospholipase A2 (PLA2) that inhibits neuromuscular transmission by blocking acetylcholine release from the nerve termini. Is directly toxic to skeletal muscle upon local application in vivo (dystrophic effect). Also has direct nephrotoxicity in experimental mice; a single subcutaneous dose (1.38 ug/kg) produces renal tubular and glomerular damage within 24 hours. PLA2 catalyzes the calcium-dependent hydrolysis of the 2-acyl groups in 3-sn-phosphoglycerides. The chain is Basic phospholipase A2 notexin from Notechis scutatus scutatus (Mainland tiger snake).